The sequence spans 448 residues: Histidine--tRNA ligase (448 aa).

2 disordered regions span residues 1 to 20 (MAIKRPKGTQDHLPDGSPKL) and 428 to 448 (AGQADQHSPAIPHDPTPQEKA).

This sequence belongs to the class-II aminoacyl-tRNA synthetase family. As to quaternary structure, homodimer.

It localises to the cytoplasm. It catalyses the reaction tRNA(His) + L-histidine + ATP = L-histidyl-tRNA(His) + AMP + diphosphate + H(+). The protein is Histidine--tRNA ligase of Deinococcus deserti (strain DSM 17065 / CIP 109153 / LMG 22923 / VCD115).